The following is a 146-amino-acid chain: MPLTYHTLKHYLPHRYPFLLVDKIVACTPGECITGIKNVTINEEFFNGHFPDEPIMPGVLMVECMAQVSGVLGFISAGLTAEDGYLYLFAGVDKVRFKRRVIPGDQLIIRSKIVMQKQGIYKFDCTVHVEDELAVSAQIMIARQEQ.

Histidine 49 is an active-site residue.

It belongs to the thioester dehydratase family. FabZ subfamily.

It localises to the cytoplasm. It catalyses the reaction a (3R)-hydroxyacyl-[ACP] = a (2E)-enoyl-[ACP] + H2O. Its function is as follows. Involved in unsaturated fatty acids biosynthesis. Catalyzes the dehydration of short chain beta-hydroxyacyl-ACPs and long chain saturated and unsaturated beta-hydroxyacyl-ACPs. This Psychrobacter arcticus (strain DSM 17307 / VKM B-2377 / 273-4) protein is 3-hydroxyacyl-[acyl-carrier-protein] dehydratase FabZ.